A 307-amino-acid chain; its full sequence is Serine/threonine-protein phosphatase PP2A-5 catalytic subunit (307 aa).

4 residues coordinate Mn(2+): D55, H57, D83, and N115. H116 serves as the catalytic Proton donor. Mn(2+) is bound by residues H165 and H239. L307 bears the Leucine methyl ester mark.

The protein belongs to the PPP phosphatase family. PP-2A subfamily. PP2A consists of a common heterodimeric core enzyme, composed of a 36 kDa catalytic subunit (subunit C) and a 65 kDa constant regulatory subunit (subunit A), that associates with a variety of regulatory subunits such as subunits B (the R2/B/PR55/B55, R3/B''/PR72/PR130/PR59 and R5/B'/B56 families). Also interacts with CHIP and TAF12B. Interacts with B'THETA. Interacts with CLC-A, CLC-B, CLC-C and CLC-G. The cofactor is Mn(2+). Post-translationally, reversibly methyl esterified on Leu-307 by leucine carboxyl methyltransferase 1 (LCMT1) and pectin methylesterase 1 (PME1). Carboxyl methylation influences the affinity of the catalytic subunit for the different regulatory subunits, thereby modulating the PP2A holoenzyme's substrate specificity, enzyme activity and cellular localization. Phosphorylation of either threonine (by autophosphorylation-activated protein kinase) or tyrosine results in inactivation of the phosphatase. Auto-dephosphorylation has been suggested as a mechanism for reactivation. In terms of processing, ubiquitinated. CHIP-mediated ubiquitination enhances phosphatase activity after an abiotic stress such as low temperature or darkness.

The protein resides in the cytoplasm. It localises to the cytosol. The protein localises to the peroxisome. It carries out the reaction O-phospho-L-seryl-[protein] + H2O = L-seryl-[protein] + phosphate. It catalyses the reaction O-phospho-L-threonyl-[protein] + H2O = L-threonyl-[protein] + phosphate. Functionally, associates with the serine/threonine-protein phosphatase PP2A regulatory subunits A and B' to positively regulates beta-oxidation of fatty acids and protoauxins in peroxisomes by dephosphorylating peroxisomal beta-oxidation-related proteins. Involved in the positive regulation of salt stress responses. May function by increasing chloride channel activities on vacuolar membranes. The chain is Serine/threonine-protein phosphatase PP2A-5 catalytic subunit from Arabidopsis thaliana (Mouse-ear cress).